The following is a 383-amino-acid chain: Chitinase-3-like protein 1 (383 aa).

A signal peptide spans 1–21 (MGLRAAHTGFVVLVLLQSCAA). Residues 22-383 (YKLICYYTSW…SAIKDVLARV (362 aa)) form the GH18 domain. Cys26 and Cys51 are disulfide-bonded. Asn60 carries an N-linked (GlcNAc...) asparagine glycan. Residues 70 to 71 (EW), 97 to 100 (GGWN), Tyr141, 204 to 207 (LTYD), and Arg263 each bind chitin. The cysteines at positions 300 and 364 are disulfide-linked. Residues 324 to 338 (QWVAYDDQESVKNKA) form an important for AKT1 activation and IL8 production region. Trp352 contributes to the chitin binding site. The N-linked (GlcNAc...) asparagine glycan is linked to Asn367.

It belongs to the glycosyl hydrolase 18 family. Monomer. Post-translationally, glycosylated. Mammary secretions collected during the non-lactating period.

The protein resides in the secreted. It localises to the extracellular space. Its subcellular location is the cytoplasm. It is found in the perinuclear region. The protein localises to the endoplasmic reticulum. Carbohydrate-binding lectin with a preference for chitin. Has no chitinase activity. May play a role in tissue remodeling and in the capacity of cells to respond to and cope with changes in their environment. Plays a role in T-helper cell type 2 (Th2) inflammatory response and IL-13-induced inflammation, regulating allergen sensitization, inflammatory cell apoptosis, dendritic cell accumulation and M2 macrophage differentiation. Facilitates invasion of pathogenic enteric bacteria into colonic mucosa and lymphoid organs. Mediates activation of AKT1 signaling pathway and subsequent IL8 production in colonic epithelial cells. Regulates antibacterial responses in lung by contributing to macrophage bacterial killing, controlling bacterial dissemination and augmenting host tolerance. Also regulates hyperoxia-induced injury, inflammation and epithelial apoptosis in lung. This is Chitinase-3-like protein 1 (CHI3L1) from Bos taurus (Bovine).